Consider the following 532-residue polypeptide: P granule abnormality protein 2 (532 aa).

In terms of assembly, interacts with pgl-1 and pgl-3; association with either pgl-1 or pgl-3 is not required for P-granule localization. As to expression, highly expressed in the germline.

The protein localises to the cytoplasmic granule. Functionally, transient component of P-granule which is involved in germline development. This Caenorhabditis elegans protein is P granule abnormality protein 2.